The chain runs to 387 residues: MDLFEYQAKELFAKHNVPSTPGRVTDTAEGAKAIATEIGRPVMVKAQVKIGGRGKAGGVKYAATPQDAYEHAKNILGLDIKGHIVKKLLVAEASDIAEEYYLSFLLDRANRTYLAMCSVEGGMEIEEVAATKPERLAKVPVNAVKGVDLDFARSIAEQGHLPAEVLDTAAVTIAKLWELFVAEDATLVEVNPLVRTPDHKILALDAKITLDGNADFRQPGHAEFEDRAATDPLELKAKEHDLNYVKLDGQVGIIGNGAGLAMSTLDVVAYAGEKHGGVKPANFLDIGGGASAEVMAAGLDVVLGDQQVKSVFVNVFGGITSCDAVATGIVKALGMLGDEANKPLVVRLDGNNVEEGRRILTEANHPLVTLVATMDEAADKAAELASA.

Residues 9-236 (KELFAKHNVP…RAATDPLELK (228 aa)) enclose the ATP-grasp domain. Residues K45, 52-54 (GRG), S94, and E99 each bind ATP. The Mg(2+) site is built by N191 and D205. Residues N256 and 318–320 (GIT) each bind substrate.

Belongs to the succinate/malate CoA ligase beta subunit family. Heterotetramer of two alpha and two beta subunits. It depends on Mg(2+) as a cofactor.

The catalysed reaction is succinate + ATP + CoA = succinyl-CoA + ADP + phosphate. It carries out the reaction GTP + succinate + CoA = succinyl-CoA + GDP + phosphate. Its pathway is carbohydrate metabolism; tricarboxylic acid cycle; succinate from succinyl-CoA (ligase route): step 1/1. In terms of biological role, succinyl-CoA synthetase functions in the citric acid cycle (TCA), coupling the hydrolysis of succinyl-CoA to the synthesis of either ATP or GTP and thus represents the only step of substrate-level phosphorylation in the TCA. The beta subunit provides nucleotide specificity of the enzyme and binds the substrate succinate, while the binding sites for coenzyme A and phosphate are found in the alpha subunit. The sequence is that of Succinate--CoA ligase [ADP-forming] subunit beta from Mycobacterium bovis (strain ATCC BAA-935 / AF2122/97).